The primary structure comprises 131 residues: Encapsulated ferritin-like protein (131 aa).

Positions 30, 60, and 63 each coordinate Fe cation. A disordered region spans residues 96–131; it reads EEEDTGSSSSVAASPTSAPSHGSLGIGSLRQEGKED. Residues 98–131 are targeting peptide; the sequence is EDTGSSSSVAASPTSAPSHGSLGIGSLRQEGKED. Low complexity predominate over residues 102 to 115; that stretch reads SSSSVAASPTSAPS.

Belongs to the ferritin-like superfamily. EncFtn family. Forms dimers at all pH tested; under acidic conditions formes decamers. The N-terminal domain (residues 1-97) crystallizes as a decameric ring. Four decamers are loaded in the encapsulin nanocompartment in a tetrahedral arrangement. A 3 nm gap is consistently seen between the shell and the cargo. The target peptide extends away from the decameric ring, to allow binding to the interior of the encapsulin nanocompartment shell.

It is found in the encapsulin nanocompartment. It catalyses the reaction 4 Fe(2+) + O2 + 4 H(+) = 4 Fe(3+) + 2 H2O. Its activity is regulated as follows. The ferroxidase activity is inhibited by zinc. Functionally, cargo protein of a type 1 encapsulin nanocompartment. A ferritin-like ferroxidase that converts Fe(2+) to Fe(3+) iron inside the encapsulin nanocompartment. Mineralized Fe(3+) is released to the exterior of the decameric complex for deposition in the encapsulin nanocompartment. In solution the decamer binds 10-15 iron cations; in the encapsulin nanocompartment the decamer can bind up to 48 ions, perhaps via its internal channel, and on its exterior. The cargo-loaded nanocompartment maximally sequesters up to 4150 Fe ions. The sequence is that of Encapsulated ferritin-like protein from Haliangium ochraceum (strain DSM 14365 / JCM 11303 / SMP-2).